Here is a 279-residue protein sequence, read N- to C-terminus: 3-methyl-2-oxobutanoate hydroxymethyltransferase (279 aa).

The Mg(2+) site is built by Asp-43 and Asp-82. 3-methyl-2-oxobutanoate is bound by residues Asp-43–Ser-44, Asp-82, and Lys-112. Mg(2+) is bound at residue Glu-114. The active-site Proton acceptor is the Glu-181.

It belongs to the PanB family. Homodecamer; pentamer of dimers. Mg(2+) serves as cofactor.

Its subcellular location is the cytoplasm. It carries out the reaction 3-methyl-2-oxobutanoate + (6R)-5,10-methylene-5,6,7,8-tetrahydrofolate + H2O = 2-dehydropantoate + (6S)-5,6,7,8-tetrahydrofolate. The protein operates within cofactor biosynthesis; (R)-pantothenate biosynthesis; (R)-pantoate from 3-methyl-2-oxobutanoate: step 1/2. Functionally, catalyzes the reversible reaction in which hydroxymethyl group from 5,10-methylenetetrahydrofolate is transferred onto alpha-ketoisovalerate to form ketopantoate. This is 3-methyl-2-oxobutanoate hydroxymethyltransferase from Bacillus anthracis (strain A0248).